Consider the following 276-residue polypeptide: MLMINSFDNPRLAQAFVDYMATQGVILEIQRHDTWDIWLADEAQAERVKAELSYFLAHPGDPRYLSASWQTGQLNAGLRYRSYPFMASVRAHAGPLTLGMMALCVVAYLAMSIIGSPQVAVWLAWPFDPSLKFQLWRYVSPLLLHFSLLSLIFNLLWWWYLAGPLERSVGSGKLLTLTLVTALVGGVIQYQIAGPWFGGLGGVVYALVGYVWLRGEREPESGLYLPRGILVFMLLWLAIGGLGLFGNKTANADLVAGMLIGLAMAMTDTLHARKRK.

The next 6 membrane-spanning stretches (helical) occupy residues 94–114, 142–162, 168–188, 192–212, 225–245, and 252–272; these read GPLT…MSII, LLLH…WYLA, SVGS…GGVI, IAGP…GYVW, LPRG…LGLF, and ADLV…TLHA.

This sequence belongs to the peptidase S54 family.

Its subcellular location is the cell inner membrane. In Cronobacter sakazakii (strain ATCC BAA-894) (Enterobacter sakazakii), this protein is Rhomboid protease GlpG homolog (glpG).